We begin with the raw amino-acid sequence, 518 residues long: Cytochrome P450 736A117 (518 aa).

N12 carries N-linked (GlcNAc...) asparagine glycosylation. A helical transmembrane segment spans residues 17–37; it reads FLQPLAFTLLAIFLVLLYTWY. Residues N185, N275, and N356 are each glycosylated (N-linked (GlcNAc...) asparagine). C460 contacts heme.

The protein belongs to the cytochrome P450 family. Requires heme as cofactor. Expressed at similar levels in fruit kernel, seedlings, leaves, stems and buds.

Its subcellular location is the membrane. This is Cytochrome P450 736A117 from Prunus mume (Japanese apricot).